A 272-amino-acid chain; its full sequence is Cell division protein FtsQ (272 aa).

The Cytoplasmic portion of the chain corresponds to 1–20 (MSSYAPREIPLDIRLMQGTS). The helical transmembrane segment at 21-40 (RALFWLVALGCLFVAGHWLM) threads the bilayer. Topologically, residues 41–272 (QRNWWDIRAV…KTPQPAGRKD (232 aa)) are periplasmic. Positions 45–114 (WDIRAVRLQG…MQLAVTLQAQ (70 aa)) constitute a POTRA domain.

This sequence belongs to the FtsQ/DivIB family. FtsQ subfamily. As to quaternary structure, part of a complex composed of FtsB, FtsL and FtsQ.

The protein resides in the cell inner membrane. Its function is as follows. Essential cell division protein. May link together the upstream cell division proteins, which are predominantly cytoplasmic, with the downstream cell division proteins, which are predominantly periplasmic. May control correct divisome assembly. In Thiomonas arsenitoxydans (strain DSM 22701 / CIP 110005 / 3As), this protein is Cell division protein FtsQ.